The following is a 45-amino-acid chain: Photosystem II reaction center protein K (45 aa).

Residues 1–8 constitute a propeptide that is removed on maturation; the sequence is METALLLA. A helical transmembrane segment spans residues 24-44; the sequence is LPLIPLFFLLLAFVWQASVGF.

It belongs to the PsbK family. As to quaternary structure, PSII is composed of 1 copy each of membrane proteins PsbA, PsbB, PsbC, PsbD, PsbE, PsbF, PsbH, PsbI, PsbJ, PsbK, PsbL, PsbM, PsbT, PsbX, PsbY, PsbZ, Psb30/Ycf12, peripheral proteins PsbO, CyanoQ (PsbQ), PsbU, PsbV and a large number of cofactors. It forms dimeric complexes.

It localises to the cellular thylakoid membrane. Functionally, one of the components of the core complex of photosystem II (PSII). PSII is a light-driven water:plastoquinone oxidoreductase that uses light energy to abstract electrons from H(2)O, generating O(2) and a proton gradient subsequently used for ATP formation. It consists of a core antenna complex that captures photons, and an electron transfer chain that converts photonic excitation into a charge separation. The chain is Photosystem II reaction center protein K from Microcystis aeruginosa (strain NIES-843 / IAM M-2473).